The chain runs to 79 residues: Dermaseptin-S8 (79 aa).

The first 22 residues, 1-22, serve as a signal peptide directing secretion; the sequence is MDILKKSLFLVLFLGLVSLSIC. Positions 23–45 are excised as a propeptide; sequence EEEKRENEDEEKQEDDEQSEMKR. Residue Gln-76 is modified to Glutamine amide. A propeptide spanning residues 78–79 is cleaved from the precursor; sequence AQ.

It belongs to the frog skin active peptide (FSAP) family. Dermaseptin subfamily. Expressed by the skin glands.

It localises to the secreted. In terms of biological role, potent antimicrobial peptide with activity against bacteria, fungi and protozoa. Probably acts by disturbing membrane functions with its amphipathic structure. The polypeptide is Dermaseptin-S8 (Phyllomedusa sauvagei (Sauvage's leaf frog)).